Reading from the N-terminus, the 496-residue chain is Pre-glycoprotein polyprotein GP complex (496 aa).

A lipid anchor (N-myristoyl glycine; by host) is attached at glycine 2. Topologically, residues 2–17 (GQLISFFQEIPVFLQE) are extracellular. Residues 18–32 (ALNIALVAVSLIAVI) form a helical membrane-spanning segment. A topological domain (cytoplasmic) is located at residue lysine 33. The chain crosses the membrane as a helical span at residues 34–53 (GIINLYKSGLFQFIFFLLLA). Extracellular-side segments run 54–58 (GRSCS) and 59–435 (DGTF…TLVD). Residue cysteine 57 participates in Zn(2+) binding. N-linked (GlcNAc...) asparagine; by host glycosylation is found at asparagine 83, asparagine 95, asparagine 137, asparagine 166, and asparagine 178. Intrachain disulfides connect cysteine 92–cysteine 237, cysteine 135–cysteine 164, cysteine 207–cysteine 213, cysteine 282–cysteine 295, cysteine 304–cysteine 313, and cysteine 367–cysteine 388. N-linked (GlcNAc...) asparagine; by host glycosylation is found at asparagine 368, asparagine 376, asparagine 393, and asparagine 398. The chain crosses the membrane as a helical span at residues 436-456 (ICFWSTVFFTASLFLHLVGIP). The Cytoplasmic segment spans residues 457-496 (THRHLKGEACPLPHKLDSFGGCRCGKYPRLRKPTIWHKRH). Histidine 458, histidine 460, cysteine 466, histidine 470, cysteine 478, cysteine 480, and histidine 496 together coordinate Zn(2+).

It belongs to the arenaviridae GPC protein family. In terms of assembly, homotetramer; disulfide-linked. Interacts with host TFRC. As to quaternary structure, homotetramer. GP2 homotetramers bind through ionic interactions with GP1 homotetramers to form the GP complex together with the stable signal peptide. The GP-C polyprotein interacts with the host protease MBTPS1/SKI-1 resulting in the polyprotein processing. Post-translationally, specific enzymatic cleavages in vivo yield mature proteins. GP-C polyprotein is cleaved in the endoplasmic reticulum by the host protease MBTPS1. Only cleaved glycoprotein is incorporated into virions. In terms of processing, the SSP remains stably associated with the GP complex following cleavage by signal peptidase and plays crucial roles in the trafficking of GP through the secretory pathway. Myristoylation is necessary for GP2-mediated fusion activity.

Its subcellular location is the virion membrane. The protein resides in the host endoplasmic reticulum membrane. The protein localises to the host Golgi apparatus membrane. It localises to the host cell membrane. Functionally, class I viral fusion protein that directs fusion of viral and host endosomal membranes, leading to delivery of the nucleocapsid into the cytoplasm. Membrane fusion is mediated by irreversible conformational changes induced upon acidification in the endosome. Its function is as follows. Stable signal peptide (SSP): cleaved and functions as a signal peptide. In addition, it is also retained as the third component of the GP complex. The SSP is required for efficient glycoprotein expression, post-translational maturation cleavage of GP1 and GP2, glycoprotein transport to the cell surface plasma membrane, formation of infectious virus particles, and acid pH-dependent glycoprotein-mediated cell fusion. In terms of biological role, interacts with the host receptor. Mediates virus attachment to host TFRC. This attachment induces virion internalization predominantly through clathrin-mediated endocytosis. This Machupo virus (MACV) protein is Pre-glycoprotein polyprotein GP complex.